We begin with the raw amino-acid sequence, 267 residues long: Diphthine--ammonia ligase (267 aa).

Tyrosine 97 carries the phosphotyrosine modification.

This sequence belongs to the Diphthine--ammonia ligase family.

The enzyme catalyses diphthine-[translation elongation factor 2] + NH4(+) + ATP = diphthamide-[translation elongation factor 2] + AMP + diphosphate + H(+). It participates in protein modification; peptidyl-diphthamide biosynthesis. Its function is as follows. Amidase that catalyzes the last step of diphthamide biosynthesis using ammonium and ATP. Diphthamide biosynthesis consists in the conversion of an L-histidine residue in the translation elongation factor eEF-2 (EEF2) to diphthamide. The sequence is that of Diphthine--ammonia ligase (DPH6) from Bos taurus (Bovine).